The sequence spans 375 residues: tRNA(Met) cytidine acetate ligase (375 aa).

ATP is bound by residues 7–20 (VVEY…HRYH), Gly101, Asn151, and Arg176.

Belongs to the TmcAL family.

The protein localises to the cytoplasm. The enzyme catalyses cytidine(34) in elongator tRNA(Met) + acetate + ATP = N(4)-acetylcytidine(34) in elongator tRNA(Met) + AMP + diphosphate. Catalyzes the formation of N(4)-acetylcytidine (ac(4)C) at the wobble position of elongator tRNA(Met), using acetate and ATP as substrates. First activates an acetate ion to form acetyladenylate (Ac-AMP) and then transfers the acetyl group to tRNA to form ac(4)C34. The sequence is that of tRNA(Met) cytidine acetate ligase from Limosilactobacillus fermentum (strain NBRC 3956 / LMG 18251) (Lactobacillus fermentum).